A 501-amino-acid chain; its full sequence is Iroquois-class homeodomain protein IRX-3 (501 aa).

Positions 125 to 188 form a DNA-binding region, homeobox; TALE-type; that stretch reads FGDPSRPKNA…ANARRRLKKE (64 aa). Residues 190-381 are disordered; the sequence is KMTWAPRSRT…SPPGAAVAPS (192 aa). Acidic residues-rich tracts occupy residues 210-220 and 227-258; these read REEEDEEEDEE and ELEEEELGGEEEDTGGEGLADDDEDEEIDLEN. A phosphoserine mark is found at S323 and S326. Residues 324 to 339 are compositionally biased toward pro residues; it reads LPSPPVSLDPCAPAPA.

It belongs to the TALE/IRO homeobox family.

Its subcellular location is the nucleus. Functionally, transcription factor involved in SHH-dependent neural patterning. Together with NKX2-2 and NKX6-1 acts to restrict the generation of motor neurons to the appropriate region of the neural tube. Belongs to the class I proteins of neuronal progenitor factors, which are repressed by SHH signals. Involved in the transcriptional repression of MNX1 in non-motor neuron cells. Acts as a regulator of energy metabolism. This chain is Iroquois-class homeodomain protein IRX-3 (IRX3), found in Homo sapiens (Human).